The sequence spans 143 residues: D-aminoacyl-tRNA deacylase (143 aa).

Positions 135–136 match the Gly-cisPro motif, important for rejection of L-amino acids motif; sequence GP.

It belongs to the DTD family. In terms of assembly, homodimer.

The protein localises to the cytoplasm. It catalyses the reaction glycyl-tRNA(Ala) + H2O = tRNA(Ala) + glycine + H(+). The catalysed reaction is a D-aminoacyl-tRNA + H2O = a tRNA + a D-alpha-amino acid + H(+). Its function is as follows. An aminoacyl-tRNA editing enzyme that deacylates mischarged D-aminoacyl-tRNAs. Also deacylates mischarged glycyl-tRNA(Ala), protecting cells against glycine mischarging by AlaRS. Acts via tRNA-based rather than protein-based catalysis; rejects L-amino acids rather than detecting D-amino acids in the active site. By recycling D-aminoacyl-tRNA to D-amino acids and free tRNA molecules, this enzyme counteracts the toxicity associated with the formation of D-aminoacyl-tRNA entities in vivo and helps enforce protein L-homochirality. This chain is D-aminoacyl-tRNA deacylase, found in Mycolicibacterium paratuberculosis (strain ATCC BAA-968 / K-10) (Mycobacterium paratuberculosis).